Reading from the N-terminus, the 91-residue chain is Small ribosomal subunit protein uS19 (91 aa).

This sequence belongs to the universal ribosomal protein uS19 family.

Functionally, protein S19 forms a complex with S13 that binds strongly to the 16S ribosomal RNA. This chain is Small ribosomal subunit protein uS19, found in Prochlorococcus marinus (strain MIT 9211).